Reading from the N-terminus, the 280-residue chain is Intimin (280 aa).

The Big-1 domain maps to 1-92 (ITEIKADKTT…MLKLLEVEFF (92 aa)). In terms of domain architecture, BIG2 spans 127-173 (ANGGNGKYTWYSANPAIASVDPSSGQVTLKDKGETTITVVSGDKQTA). C201 and C278 are disulfide-bonded.

Belongs to the intimin/invasin family.

It is found in the cell outer membrane. An inverse autotransporter. The polypeptide is Intimin (eaeA) (Hafnia alvei).